A 459-amino-acid chain; its full sequence is GTPase Der (459 aa).

2 EngA-type G domains span residues 3–167 (FTFA…PEPE) and 188–363 (IRVA…AVWN). GTP-binding positions include 9–16 (GRPNVGKS), 56–60 (DTAGL), 119–122 (NKSE), 194–201 (GRPNAGKS), 241–245 (DTAGL), and 306–309 (NKWD). Positions 364–448 (TRVSTAALNR…PVRITLREKA (85 aa)) constitute a KH-like domain.

This sequence belongs to the TRAFAC class TrmE-Era-EngA-EngB-Septin-like GTPase superfamily. EngA (Der) GTPase family. Associates with the 50S ribosomal subunit.

In terms of biological role, GTPase that plays an essential role in the late steps of ribosome biogenesis. The polypeptide is GTPase Der (Rhodopseudomonas palustris (strain HaA2)).